Reading from the N-terminus, the 345-residue chain is Phosphoribosylformylglycinamidine cyclo-ligase (345 aa).

The protein belongs to the AIR synthase family.

It localises to the cytoplasm. The catalysed reaction is 2-formamido-N(1)-(5-O-phospho-beta-D-ribosyl)acetamidine + ATP = 5-amino-1-(5-phospho-beta-D-ribosyl)imidazole + ADP + phosphate + H(+). It functions in the pathway purine metabolism; IMP biosynthesis via de novo pathway; 5-amino-1-(5-phospho-D-ribosyl)imidazole from N(2)-formyl-N(1)-(5-phospho-D-ribosyl)glycinamide: step 2/2. In Shewanella frigidimarina (strain NCIMB 400), this protein is Phosphoribosylformylglycinamidine cyclo-ligase.